The chain runs to 317 residues: Malate dehydrogenase (317 aa).

NAD(+) contacts are provided by residues 13-18 (GAGNIG) and D38. 2 residues coordinate substrate: R87 and R93. Residues N100 and 123–125 (VTN) contribute to the NAD(+) site. N125 and R156 together coordinate substrate. Residue H180 is the Proton acceptor of the active site.

Belongs to the LDH/MDH superfamily. MDH type 3 family.

It catalyses the reaction (S)-malate + NAD(+) = oxaloacetate + NADH + H(+). In terms of biological role, catalyzes the reversible oxidation of malate to oxaloacetate. The chain is Malate dehydrogenase from Anaplasma marginale (strain St. Maries).